Here is a 205-residue protein sequence, read N- to C-terminus: Holliday junction resolvase RecU (205 aa).

Residues methionine 1 to threonine 22 form a disordered region. Positions 90, 92, 105, and 124 each coordinate Mg(2+).

It belongs to the RecU family. Requires Mg(2+) as cofactor.

It is found in the cytoplasm. It catalyses the reaction Endonucleolytic cleavage at a junction such as a reciprocal single-stranded crossover between two homologous DNA duplexes (Holliday junction).. In terms of biological role, endonuclease that resolves Holliday junction intermediates in genetic recombination. Cleaves mobile four-strand junctions by introducing symmetrical nicks in paired strands. Promotes annealing of linear ssDNA with homologous dsDNA. Required for DNA repair, homologous recombination and chromosome segregation. This chain is Holliday junction resolvase RecU, found in Leuconostoc citreum (strain KM20).